The primary structure comprises 888 residues: MQTPRASPPRPALLLLLLLLGGAHGLFPEEPPPLSVAPRDYLNHYPVFVGSGPGRLTPAEGADDLNIQRVLRVNRTLFIGDRDNLYRVELEPPTSTELRYQRKLTWRSNPSDINVCRMKGKQEGECRNFVKVLLLRDESTLFVCGSNAFNPVCANYSIDTLQPVGDNISGMARCPYDPKHANVALFSDGMLFTATVTDFLAIDAVIYRSLGDRPTLRTVKHDSKWFKEPYFVHAVEWGSHVYFFFREIAMEFNYLEKVVVSRVARVCKNDVGGSPRVLEKQWTSFLKARLNCSVPGDSHFYFNVLQAVTGVVSLGGRPVVLAVFSTPSNSIPGSAVCAFDLTQVAAVFEGRFREQKSPESIWTPVPEDQVPRPRPGCCAAPGMQYNASSALPDDILNFVKTHPLMDEAVPSLGHAPWILRTLMRHQLTRVAVDVGAGPWGNQTVVFLGSEAGTVLKFLVRPNASTSGTSGLSVFLEEFETYRPDRCGRPGGGETGQRLLSLELDAASGGLLAAFPRCVVRVPVARCQQYSGCMKNCIGSQDPYCGWAPDGSCIFLSPGTRAAFEQDVSGASTSGLGDCTGLLRASLSEDRAGLVSVNLLVTSSVAAFVVGAVVSGFSVGWFVGLRERRELARRKDKEAILAHGAGEAVLSVSRLGERRAQGPGGRGGGGGGGAGVPPEALLAPLMQNGWAKATLLQGGPHDLDSGLLPTPEQTPLPQKRLPTPHPHPHALGPRAWDHGHPLLPASASSSLLLLAPARAPEQPPAPGEPTPDGRLYAARPGRASHGDFPLTPHASPDRRRVVSAPTGPLDPASAADGLPRPWSPPPTGSLRRPLGPHAPPAATLRRTHTFNSGEARPGDRHRGCHARPGTDLAHLLPYGGADRTAPPVP.

The signal sequence occupies residues 1–25 (MQTPRASPPRPALLLLLLLLGGAHG). Residues 26–603 (LFPEEPPPLS…VSVNLLVTSS (578 aa)) lie on the Extracellular side of the membrane. In terms of domain architecture, Sema spans 31 to 523 (PPPLSVAPRD…FPRCVVRVPV (493 aa)). Asn74 carries N-linked (GlcNAc...) asparagine glycosylation. 2 cysteine pairs are disulfide-bonded: Cys116-Cys126 and Cys144-Cys153. N-linked (GlcNAc...) asparagine glycans are attached at residues Asn155, Asn167, and Asn291. 2 cysteine pairs are disulfide-bonded: Cys267/Cys378 and Cys292/Cys337. Asn386, Asn441, and Asn462 each carry an N-linked (GlcNAc...) asparagine glycan. Intrachain disulfides connect Cys486-Cys517, Cys526-Cys544, Cys532-Cys578, and Cys536-Cys552. A helical membrane pass occupies residues 604-624 (VAAFVVGAVVSGFSVGWFVGL). Residues 625-888 (RERRELARRK…GADRTAPPVP (264 aa)) are Cytoplasmic-facing. Disordered regions lie at residues 651 to 679 (VSRLGERRAQGPGGRGGGGGGGAGVPPEA), 695 to 742 (LQGG…HPLL), and 757 to 888 (RAPE…PPVP). The span at 661-674 (GPGGRGGGGGGGAG) shows a compositional bias: gly residues. Residue Arg665 is modified to Omega-N-methylarginine. Residues 706-717 (LLPTPEQTPLPQ) show a composition bias toward low complexity.

This sequence belongs to the semaphorin family. (Microbial infection) Interacts with P.sordellii toxin TcsL; semaphorins SEMA6A and SEMA6B constitute the major host receptors for TcsL in the vascular endothelium. As to expression, expressed in the brain in GABAergic neurons.

The protein resides in the cell membrane. Functionally, functions as a cell surface repellent for mossy fibers of developing neurons in the hippocampus where it plays a role in axon guidance. May function through the PLXNA4 receptor expressed by mossy cell axons. (Microbial infection) Acts as a receptor for P.sordellii toxin TcsL in the in the vascular endothelium. This chain is Semaphorin-6B (SEMA6B), found in Homo sapiens (Human).